Here is an 865-residue protein sequence, read N- to C-terminus: MANLLRVLMVAEKPSIALSIASVLSHGQMSTRRGSTEVHEFDGMFRGFKAHYRVTSVIGHVFSVDFPEKYQNWATIDPQDLFDAPIIKKESNPKAHICRHLSNEARGCSYMVLWLDCDREGENICFEVIESTGFDMKDSKRKVYRARFSSVTEKDISKAMDNLVEPNRDEALAVDARQEIDLKVGVAFSRFQTSYFQGKYQNLDCRVISYGPCQTPTLGFCVQRYMHINTFKPEKFWALRPYIRKDGYELQLEWERRRLFDLEAATVFQKLVVEGRTAKVMDVSEKQEVKGRPAGLNTVNLLKVASSALGFGPQTAMHLAERLYTQGFISYPRTESTAYPSSFDFTDTLRAQVSNPVWGGYVQRLLSDGFHMPKSGTDAGDHPPITPMRAATEVMVGGDAWRLYQYVCQHFLGTVSPNCKYIRTKVELSIGGETFHCTGQRVTEKGFTAIMPWSAVDEKKLPSFLKGERIEVLRVELYEGNTAPPDYLTESELISLMEKHGIGTDASIAVHINNIGERNYVQVQSGRKMVPTALGITLIRGYQCIDPDLCLPDIRSFIEQQITLVAKGQADHSHVVQHVIQQFRRKFSYFVQQIEHMDALFEAQFSPLADSGRALSKCGKCLRYMKHITAVPPRLFCGTCEEVYYLPQKGTVKLYKELTCPLDNFELVIYSVPGPEGKSFPLCPYCYNSPPFEGIDTLFGASKTPNAPAKTKTGAGMPCSLCPHPTCQHSVRNQGVCACPECEGTLVLDPVSFPKWKLNCNLCSCIVLLPEGAHRITTTSNRCPECDSAIIEIDFNKKTTPLENGATLHQGCVLCDELLLSLVEVKHGRSFVRRGGRGRGRGRGRGRGGRRGSKSVDPKMSFRDF.

The region spanning 6-151 is the Toprim domain; it reads RVLMVAEKPS…KVYRARFSSV (146 aa). Mg(2+)-binding residues include glutamate 12, aspartate 116, and aspartate 118. Residues 167–587 form the Topo IA-type catalytic domain; sequence NRDEALAVDA…HVIQQFRRKF (421 aa). Positions 209–214 are interaction with DNA; sequence SYGPCQ. The O-(5'-phospho-DNA)-tyrosine intermediate role is filled by tyrosine 331. Residues 833–853 show a composition bias toward basic residues; that stretch reads RRGGRGRGRGRGRGRGGRRGS. Residues 833-865 form a disordered region; the sequence is RRGGRGRGRGRGRGRGGRRGSKSVDPKMSFRDF. Positions 854-865 are enriched in basic and acidic residues; the sequence is KSVDPKMSFRDF.

The protein belongs to the type IA topoisomerase family. Requires Mg(2+) as cofactor.

It catalyses the reaction ATP-independent breakage of single-stranded DNA, followed by passage and rejoining.. In terms of biological role, releases the supercoiling and torsional tension of DNA introduced during the DNA replication and transcription by transiently cleaving and rejoining one strand of the DNA duplex. Introduces a single-strand break via transesterification at a target site in duplex DNA. The scissile phosphodiester is attacked by the catalytic tyrosine of the enzyme, resulting in the formation of a DNA-(5'-phosphotyrosyl)-enzyme intermediate and the expulsion of a 3'-OH DNA strand. The free DNA strand than undergoes passage around the unbroken strand thus removing DNA supercoils. Finally, in the religation step, the DNA 3'-OH attacks the covalent intermediate to expel the active-site tyrosine and restore the DNA phosphodiester backbone. The protein is DNA topoisomerase 3-beta of Arabidopsis thaliana (Mouse-ear cress).